The primary structure comprises 595 residues: uncharacterized protein (595 aa).

Residues 1-21 form a disordered region; that stretch reads MSSQLKSTWAPVPSTKPSQPC. 11 WD repeats span residues 56-95, 100-143, 144-184, 187-226, 229-268, 313-352, 356-393, 433-472, 477-516, 520-559, and 564-594; these read EHTAPTTVARFSPSGYYVASGDNQGNVRIWDCAGEDKILK, AISG…GEIF, GHSS…FNRS, VHSKFVYDVRYSPNDERFASAGADGKVYVFDGKTGDQVYE, AHKGSIFSISWSPDSSQFVTSSAGYSCKIWDANTGSLIRE, GHQRSITAATLSPDATHFYTASYDGTVLSWDIGKQKAFPL, SHTNQVMQMIMADDHVITIGMDDTLRVIDIKQGCFAKD, KTIYQPSAVASHPLKSEFCVGGEDCCVYIHTLEKGELCEV, DSTAPITCLAYSPDGKYLACGDASGKVVLYDANSREVITS, FHTGRILGMSWNAKSTHLATASLDTNIHIYSVERPMKYIA, and HSLGATQVEWVSENELLSTGSDAAIKVWSVT.

It belongs to the WD repeat AIP1 family.

This is an uncharacterized protein from Schizosaccharomyces pombe (strain 972 / ATCC 24843) (Fission yeast).